We begin with the raw amino-acid sequence, 189 residues long: uncharacterized protein (189 aa).

A coiled-coil region spans residues 31–54 (KCENIDDLANRYEVSKQEVEKVFK). 4 consecutive EF-hand domains span residues 47–82 (QEVE…LGID), 83–118 (VSPK…KIKL), 120–155 (TVKA…TVST), and 157–189 (ITVK…CQTV). Ca(2+) is bound by residues Asp-60, Asp-62, Ser-64, Thr-66, Glu-71, Asp-96, Ser-98, Asp-100, Gln-102, Glu-107, Asp-133, Asn-135, Glu-137, and Glu-144.

This is an uncharacterized protein from Caenorhabditis elegans.